The chain runs to 351 residues: tRNA-specific 2-thiouridylase MnmA 2 (351 aa).

Residues 13–20 (GMSGGTDS) and F39 contribute to the ATP site. C98 functions as the Nucleophile in the catalytic mechanism. C98 and C195 are joined by a disulfide. G122 is a binding site for ATP. The interaction with tRNA stretch occupies residues 144-146 (KDQ). The Cysteine persulfide intermediate role is filled by C195. An interaction with tRNA region spans residues 301-302 (RY).

This sequence belongs to the MnmA/TRMU family.

It is found in the cytoplasm. The catalysed reaction is S-sulfanyl-L-cysteinyl-[protein] + uridine(34) in tRNA + AH2 + ATP = 2-thiouridine(34) in tRNA + L-cysteinyl-[protein] + A + AMP + diphosphate + H(+). In terms of biological role, catalyzes the 2-thiolation of uridine at the wobble position (U34) of tRNA, leading to the formation of s(2)U34. The chain is tRNA-specific 2-thiouridylase MnmA 2 from Phocaeicola vulgatus (strain ATCC 8482 / DSM 1447 / JCM 5826 / CCUG 4940 / NBRC 14291 / NCTC 11154) (Bacteroides vulgatus).